The chain runs to 173 residues: MPLLDSFTVDHKIMNAPAVRVAKTMKTPGGDTITVFDLRFNKPNVDMMGEKGIHTLEHLFAGFIRAHLNADDVEIIDVSPMGCRTGFYMSLIGTPDEKRVADAWMKAMQDVLNVEKMEDIPELNEYQCGTYTMHSLEEAKSIAQNIIDHGIGVNKNENIALDKETLKALGNDV.

Fe cation is bound by residues His-54, His-58, and Cys-128.

Belongs to the LuxS family. In terms of assembly, homodimer. Fe cation serves as cofactor.

It carries out the reaction S-(5-deoxy-D-ribos-5-yl)-L-homocysteine = (S)-4,5-dihydroxypentane-2,3-dione + L-homocysteine. In terms of biological role, involved in the synthesis of autoinducer 2 (AI-2) which is secreted by bacteria and is used to communicate both the cell density and the metabolic potential of the environment. The regulation of gene expression in response to changes in cell density is called quorum sensing. Catalyzes the transformation of S-ribosylhomocysteine (RHC) to homocysteine (HC) and 4,5-dihydroxy-2,3-pentadione (DPD). The sequence is that of S-ribosylhomocysteine lyase from Hydrogenovibrio crunogenus (strain DSM 25203 / XCL-2) (Thiomicrospira crunogena).